The primary structure comprises 207 residues: dTDP-4-dehydrorhamnose 3-epimerase (207 aa).

Substrate contacts are provided by residues Arg23, Asp28, 47 to 49 (QAN), and Arg59. His62 functions as the Proton acceptor in the catalytic mechanism. Substrate is bound by residues Lys72 and His119. The active-site Proton donor is the Tyr132. Residues Glu143 and Arg167 each contribute to the substrate site.

It belongs to the dTDP-4-dehydrorhamnose 3,5-epimerase family.

It participates in antibiotic biosynthesis; novobiocin biosynthesis. Functionally, dTDP-6-deoxy-D-xylo-4-hexulose 3-epimerase that acts together with NovU to catalyze the formation of dTDP-4-keto-6-deoxy-5-C-methyl-L-lyxo-hexose from dTDP-4-keto-6-deoxy-D-glucose in the novobiocin biosynthesis pathway, an aminocoumarin family antibiotic that targets bacterial DNA gyrases. In Streptomyces niveus (Streptomyces spheroides), this protein is dTDP-4-dehydrorhamnose 3-epimerase.